A 150-amino-acid chain; its full sequence is Macrodomain Ter protein (150 aa).

The protein belongs to the MatP family. Homodimer.

Its subcellular location is the cytoplasm. Its function is as follows. Required for spatial organization of the terminus region of the chromosome (Ter macrodomain) during the cell cycle. Prevents early segregation of duplicated Ter macrodomains during cell division. Binds specifically to matS, which is a 13 bp signature motif repeated within the Ter macrodomain. The chain is Macrodomain Ter protein from Salmonella agona (strain SL483).